A 102-amino-acid polypeptide reads, in one-letter code: Protamine-2 (102 aa).

Residues 1-102 (MVRCRVRSPS…RTRRRTCRRH (102 aa)) form a disordered region. Serine 8, serine 10, and serine 37 each carry phosphoserine. The span at 8-17 (SPSERSHEVY) shows a compositional bias: basic and acidic residues. Residues 39–48 (EHVEVYERTH) show a composition bias toward basic and acidic residues. Positions 49–102 (GHSHYRRRHCSRRRLRRIHRQQHRSCRRRKRRSCRHRRRHRKGCRTRRRTCRRH) are enriched in basic residues.

This sequence belongs to the protamine P2 family. As to quaternary structure, interacts with TDRP. In terms of processing, proteolytic processing into mature chains is required for histone eviction during spermatogenesis. Transition proteins (TNP1 and TNP2) are required for processing. As to expression, testis.

The protein resides in the nucleus. The protein localises to the chromosome. In terms of biological role, protamines substitute for histones in the chromatin of sperm during the haploid phase of spermatogenesis. They compact sperm DNA into a highly condensed, stable and inactive complex. In Gorilla gorilla gorilla (Western lowland gorilla), this protein is Protamine-2 (PRM2).